A 321-amino-acid polypeptide reads, in one-letter code: uncharacterized protein (321 aa).

9 consecutive transmembrane segments (helical) span residues 10-28, 41-63, 94-111, 116-138, 143-165, 200-222, 237-259, 266-283, and 293-315; these read LWCS…EMSI, IALY…IWIY, NVAM…SMVH, LFYG…VWLL, FLFY…SNGV, NGVI…DIIF, PFII…VILA, YIIK…SIKI, and IMLS…KFFF.

It belongs to the TerC family.

The protein resides in the cell membrane. This is an uncharacterized protein from Buchnera aphidicola subsp. Baizongia pistaciae (strain Bp).